The primary structure comprises 474 residues: Cysteine--tRNA ligase (474 aa).

Cys-29 contacts Zn(2+). The 'HIGH' region motif lies at 31-41 (ITPYDHVHVGH). Residues Cys-215, His-240, and Glu-244 each contribute to the Zn(2+) site. The short motif at 273–277 (KMSKS) is the 'KMSKS' region element. Lys-276 provides a ligand contact to ATP.

It belongs to the class-I aminoacyl-tRNA synthetase family. Zn(2+) is required as a cofactor.

The protein localises to the cytoplasm. The enzyme catalyses tRNA(Cys) + L-cysteine + ATP = L-cysteinyl-tRNA(Cys) + AMP + diphosphate. This Pyrobaculum aerophilum (strain ATCC 51768 / DSM 7523 / JCM 9630 / CIP 104966 / NBRC 100827 / IM2) protein is Cysteine--tRNA ligase.